Consider the following 887-residue polypeptide: Beta-galactosidase 14 (887 aa).

The N-terminal stretch at 1–31 (MSKSSRIRMKSRTRYLIAILLVISLCSKASS) is a signal peptide. Catalysis depends on Glu197, which acts as the Proton donor. The active-site Nucleophile is Glu268. N-linked (GlcNAc...) asparagine glycosylation is found at Asn269, Asn300, Asn395, and Asn785. An SUEL-type lectin domain is found at 752-838 (KDMRLKAVMR…KTLAVQVKCE (87 aa)). Positions 838–852 (EKKEGKQDEKKKKED) are enriched in basic and acidic residues. The tract at residues 838–887 (EKKEGKQDEKKKKEDKDEEEEDDEDDDEEEEEEDKENKDTKDMENKNQDM) is disordered. Positions 853-871 (KDEEEEDDEDDDEEEEEED) are enriched in acidic residues. Residues 872–887 (KENKDTKDMENKNQDM) are compositionally biased toward basic and acidic residues.

The protein belongs to the glycosyl hydrolase 35 family.

It is found in the secreted. Its subcellular location is the extracellular space. The protein resides in the apoplast. It catalyses the reaction Hydrolysis of terminal non-reducing beta-D-galactose residues in beta-D-galactosides.. The chain is Beta-galactosidase 14 (BGAL14) from Arabidopsis thaliana (Mouse-ear cress).